Reading from the N-terminus, the 647-residue chain is Nucleoside triphosphatase I (647 aa).

The Helicase ATP-binding domain occupies 48–213; sequence FIGLSELNSL…KYLINLLRPK (166 aa). Residue 61–68 coordinates ATP; it reads WDTGYGKT. Positions 150–153 match the DEXH box motif; sequence DEVH. Positions 377-540 constitute a Helicase C-terminal domain; sequence YIEACKIILN…KINVLNSFMK (164 aa). A binding to the cap-specific mRNA (nucleoside-2'-O-)-methyltransferase region spans residues 466–532; sequence DIIILDLPWK…DLIKSKQDKI (67 aa).

This sequence belongs to the helicase family. NPH I subfamily. In terms of assembly, monomer. Interacts (via C-terminus) with RAP94 (via N-terminus). Interacts with the cap-specific mRNA (nucleoside-2'-O-)-methyltransferase.

Its subcellular location is the virion. The enzyme catalyses a ribonucleoside 5'-triphosphate + H2O = a ribonucleoside 5'-diphosphate + phosphate + H(+). In terms of biological role, DNA-dependent ATPase required for providing the needed energy to achieve the termination of early transcripts. Acts in concert with the RAP94 subunit of the virion RNA polymerase and the capping enzyme/VTF to catalyze release of UUUUUNU-containing nascent RNA from the elongation complex. NPH-I must bind ssDNA in order to exhibit ATPase activity. The sequence is that of Nucleoside triphosphatase I (NPH1) from Melanoplus sanguinipes entomopoxvirus (MsEPV).